A 146-amino-acid polypeptide reads, in one-letter code: Hemoglobin subunit beta (146 aa).

Valine 1 carries the N-acetylvaline modification. One can recognise a Globin domain in the interval 2 to 146 (HLTDAEKAAI…VASALAHKYH (145 aa)). Histidine 63 lines the heme b pocket. Lysine 82 carries the post-translational modification N6-acetyllysine. Histidine 92 provides a ligand contact to heme b. Cysteine 93 is modified (S-nitrosocysteine). Residue lysine 144 is modified to N6-acetyllysine.

It belongs to the globin family. As to quaternary structure, heterotetramer of two alpha chains and two beta chains. In terms of tissue distribution, red blood cells.

Involved in oxygen transport from the lung to the various peripheral tissues. This chain is Hemoglobin subunit beta (HBB), found in Microtus xanthognathus (Yellow-cheeked vole).